The sequence spans 314 residues: MMGQNQTSISDFLLLGLPIQPEQQNLCYALFLAMYLTTLLGNLLIIVLIRLDSHLHTPMYLFLSNLSFSDLCFSSVTIPKLLQNMQNQDPSIPYADCLTQMYFFLLFGDLESFLLVAMAYDRYVAICFPLHYTAIMSPMLCLSLVALSWVLTTFHAMLHTLLMARLCFCADNVIPHFFCDMSALLKLACSDTRVNEWVIFIMGGLIVVIPFLLILGSYARIVSSILKVPSSKGICKAFSTCGSHLSVVSLFYGTIIGLYLCPSANSSTLKETVMAMMYTVVTPMLNPFIYSLRNRDMKGALERVICKRKNPFLL.

Residues 1-25 lie on the Extracellular side of the membrane; it reads MMGQNQTSISDFLLLGLPIQPEQQN. N-linked (GlcNAc...) asparagine glycosylation occurs at N5. A helical transmembrane segment spans residues 26–49; it reads LCYALFLAMYLTTLLGNLLIIVLI. Residues 50–57 lie on the Cytoplasmic side of the membrane; that stretch reads RLDSHLHT. A helical transmembrane segment spans residues 58 to 79; sequence PMYLFLSNLSFSDLCFSSVTIP. The Extracellular segment spans residues 80–100; it reads KLLQNMQNQDPSIPYADCLTQ. A disulfide bridge connects residues C97 and C189. A helical membrane pass occupies residues 101-120; sequence MYFFLLFGDLESFLLVAMAY. Topologically, residues 121–139 are cytoplasmic; it reads DRYVAICFPLHYTAIMSPM. The chain crosses the membrane as a helical span at residues 140-158; that stretch reads LCLSLVALSWVLTTFHAML. Over 159 to 195 the chain is Extracellular; that stretch reads HTLLMARLCFCADNVIPHFFCDMSALLKLACSDTRVN. Residues 196 to 219 form a helical membrane-spanning segment; that stretch reads EWVIFIMGGLIVVIPFLLILGSYA. At 220–236 the chain is on the cytoplasmic side; it reads RIVSSILKVPSSKGICK. A helical transmembrane segment spans residues 237–259; sequence AFSTCGSHLSVVSLFYGTIIGLY. Over 260–272 the chain is Extracellular; that stretch reads LCPSANSSTLKET. Residue N265 is glycosylated (N-linked (GlcNAc...) asparagine). The helical transmembrane segment at 273–292 threads the bilayer; the sequence is VMAMMYTVVTPMLNPFIYSL. Topologically, residues 293–314 are cytoplasmic; sequence RNRDMKGALERVICKRKNPFLL.

Belongs to the G-protein coupled receptor 1 family.

It is found in the cell membrane. Its function is as follows. Odorant receptor. The polypeptide is Olfactory receptor 1E2 (OR1E2) (Gorilla gorilla gorilla (Western lowland gorilla)).